A 103-amino-acid polypeptide reads, in one-letter code: Cell division protein FtsB (103 aa).

The Cytoplasmic segment spans residues 1–3 (MGK). The helical transmembrane segment at 4–21 (LTLLLLALLVWLQYSLWF) threads the bilayer. Residues 22 to 103 (GKNGIHDYSR…RAGGPAQNNR (82 aa)) are Periplasmic-facing. The stretch at 38 to 62 (VQQATNAKLKARNDQLFAEIDDLNG) forms a coiled coil.

This sequence belongs to the FtsB family. As to quaternary structure, part of a complex composed of FtsB, FtsL and FtsQ.

It is found in the cell inner membrane. Essential cell division protein. May link together the upstream cell division proteins, which are predominantly cytoplasmic, with the downstream cell division proteins, which are predominantly periplasmic. The chain is Cell division protein FtsB from Cronobacter sakazakii (strain ATCC BAA-894) (Enterobacter sakazakii).